The following is a 162-amino-acid chain: Phosphopantetheine adenylyltransferase (162 aa).

Threonine 9 contributes to the substrate binding site. ATP contacts are provided by residues 9 to 10 (TF) and histidine 17. Positions 41, 73, and 87 each coordinate substrate. ATP is bound by residues 88-90 (GLR), glutamate 98, and 123-129 (FAFLSST).

This sequence belongs to the bacterial CoaD family. In terms of assembly, homohexamer. It depends on Mg(2+) as a cofactor.

The protein resides in the cytoplasm. The enzyme catalyses (R)-4'-phosphopantetheine + ATP + H(+) = 3'-dephospho-CoA + diphosphate. The protein operates within cofactor biosynthesis; coenzyme A biosynthesis; CoA from (R)-pantothenate: step 4/5. Functionally, reversibly transfers an adenylyl group from ATP to 4'-phosphopantetheine, yielding dephospho-CoA (dPCoA) and pyrophosphate. The sequence is that of Phosphopantetheine adenylyltransferase from Vibrio atlanticus (strain LGP32) (Vibrio splendidus (strain Mel32)).